Consider the following 140-residue polypeptide: Smith-Magenis syndrome chromosomal region candidate gene 5 protein (140 aa).

Positions 43–77 (CTGPSSQAPPQPPQASPPAAADHSRTPSLLASSHS) are disordered. The segment covering 49 to 58 (QAPPQPPQAS) has biased composition (pro residues).

As to expression, widely expressed.

This is Smith-Magenis syndrome chromosomal region candidate gene 5 protein (SMCR5) from Homo sapiens (Human).